Here is a 271-residue protein sequence, read N- to C-terminus: Thioredoxin-related transmembrane protein 2 homolog (271 aa).

Positions 1–28 are cleaved as a signal peptide; that stretch reads MTWKKQMALLAKPYYWVNILLAISYLLA. Residues 29 to 102 are Extracellular-facing; the sequence is KKTQFICTRL…AILWAYADFR (74 aa). Residues 103–123 traverse the membrane as a helical segment; the sequence is YGLGFLLLCVLVGMVLPEPSY. The Thioredoxin domain maps to 112–262; the sequence is VLVGMVLPEP…YKEAIERLPI (151 aa). At 124 to 271 the chain is on the cytoplasmic side; the sequence is RGPEHITYFR…IAPKEAKKVQ (148 aa). The Di-lysine motif motif lies at 268–271; sequence KKVQ.

It localises to the membrane. The sequence is that of Thioredoxin-related transmembrane protein 2 homolog from Drosophila melanogaster (Fruit fly).